The following is a 137-amino-acid chain: 3-hydroxyacyl-[acyl-carrier-protein] dehydratase FabZ (137 aa).

Residue histidine 46 is part of the active site.

This sequence belongs to the thioester dehydratase family. FabZ subfamily.

It localises to the cytoplasm. The catalysed reaction is a (3R)-hydroxyacyl-[ACP] = a (2E)-enoyl-[ACP] + H2O. Involved in unsaturated fatty acids biosynthesis. Catalyzes the dehydration of short chain beta-hydroxyacyl-ACPs and long chain saturated and unsaturated beta-hydroxyacyl-ACPs. The chain is 3-hydroxyacyl-[acyl-carrier-protein] dehydratase FabZ from Thermotoga neapolitana (strain ATCC 49049 / DSM 4359 / NBRC 107923 / NS-E).